The sequence spans 551 residues: Adenine deaminase (551 aa).

Belongs to the metallo-dependent hydrolases superfamily. Adenine deaminase family. Requires Mn(2+) as cofactor.

The catalysed reaction is adenine + H2O + H(+) = hypoxanthine + NH4(+). In Methanosarcina barkeri (strain Fusaro / DSM 804), this protein is Adenine deaminase.